The chain runs to 331 residues: MSELPAFWLRRPPDWRAHALRPLAALYGGVMRLRRYGYRKGWIRRGRLPVPVVVVGNIFVGGTGKTPLVAWIADTLAAMGRRPGIVSRGYGGRSREWPRRVAADSDPAEVGDEPLLLARGTGCPVAVGPDRVAAAQLLLAAGCDVVVSDDGLQHYRLPRALELVVCDGHRGLGNGLCLPAGPLREPADRLADVDMVISNGRAPALTPWWFELVPGPLRPLAADAAPEGGPEPGTTVHAVAGIGHPARFFATLEGLGYRVIPHPFPDHHPYRAGELRFGDDRPVIMTEKDAVKCAGLAPARSWFLPVEARPEPATRERLEASLARLHSLTNR.

59–66 (FVGGTGKT) contacts ATP.

Belongs to the LpxK family.

It carries out the reaction a lipid A disaccharide + ATP = a lipid IVA + ADP + H(+). It functions in the pathway glycolipid biosynthesis; lipid IV(A) biosynthesis; lipid IV(A) from (3R)-3-hydroxytetradecanoyl-[acyl-carrier-protein] and UDP-N-acetyl-alpha-D-glucosamine: step 6/6. Functionally, transfers the gamma-phosphate of ATP to the 4'-position of a tetraacyldisaccharide 1-phosphate intermediate (termed DS-1-P) to form tetraacyldisaccharide 1,4'-bis-phosphate (lipid IVA). The protein is Tetraacyldisaccharide 4'-kinase of Alkalilimnicola ehrlichii (strain ATCC BAA-1101 / DSM 17681 / MLHE-1).